The chain runs to 164 residues: UPF0304 protein ECA3037 (164 aa).

The protein belongs to the UPF0304 family.

In Pectobacterium atrosepticum (strain SCRI 1043 / ATCC BAA-672) (Erwinia carotovora subsp. atroseptica), this protein is UPF0304 protein ECA3037.